The sequence spans 114 residues: uncharacterized protein (114 aa).

The protein to M.jannaschii MJ0310 and MJ0714.

This is an uncharacterized protein from Methanocaldococcus jannaschii (strain ATCC 43067 / DSM 2661 / JAL-1 / JCM 10045 / NBRC 100440) (Methanococcus jannaschii).